Reading from the N-terminus, the 325-residue chain is MSPNPSSFGKVAVLMGGRSAEREISLMSGSGVVQALRSQGIDAHAFDPAERDLGELKTGGFARCFIALHGRFGEDGTVQGALELLGIPYTGSGVMASSMAIDKVMTKRLLLSESLPTPRYVLLRRGGYSPAQVDAIVDTLGLPLIVKPAREGSSLGLSKVTERAAMAAAVALAEKMDADILCEQFISGDEVTCPVLGTGEQARALPVIRIVAPEGNYDYQNKYFTDTTQYLVPCGLPAGEEAAIQQLVLQAFRTLNCRGWARADVMIDQATRKPYLLEINTSPGMTGHSLVPMSARAAGISYEALCVEVLKTALLDHQPRDGSLP.

Positions Lys107–Lys311 constitute an ATP-grasp domain. Residue Val137–Thr192 participates in ATP binding. Residues Asp264, Glu278, and Asn280 each coordinate Mg(2+).

It belongs to the D-alanine--D-alanine ligase family. It depends on Mg(2+) as a cofactor. Mn(2+) is required as a cofactor.

The protein localises to the cytoplasm. It catalyses the reaction 2 D-alanine + ATP = D-alanyl-D-alanine + ADP + phosphate + H(+). Its pathway is cell wall biogenesis; peptidoglycan biosynthesis. In terms of biological role, cell wall formation. The chain is D-alanine--D-alanine ligase from Polaromonas naphthalenivorans (strain CJ2).